A 493-amino-acid chain; its full sequence is Chromosomal replication initiator protein DnaA (493 aa).

A domain I, interacts with DnaA modulators region spans residues 1–105 (MSDTIQQEAP…LMYSIVIDKS (105 aa)). The segment at 105–152 (SQGQPVTIELPHQIDAAPAERSVRPEAPGQKASAERERLEIARPRFES) is domain II. The disordered stretch occupies residues 121-140 (APAERSVRPEAPGQKASAER). Positions 153–370 (NLNPKYTFST…GCIVKLLAAH (218 aa)) are domain III, AAA+ region. Residues Gly-198, Gly-200, Lys-201, and Thr-202 each contribute to the ATP site. Residues 371–493 (SLDNQEIDLQ…LRKRIEIMSM (123 aa)) form a domain IV, binds dsDNA region.

This sequence belongs to the DnaA family. As to quaternary structure, oligomerizes as a right-handed, spiral filament on DNA at oriC.

Its subcellular location is the cytoplasm. Plays an essential role in the initiation and regulation of chromosomal replication. ATP-DnaA binds to the origin of replication (oriC) to initiate formation of the DNA replication initiation complex once per cell cycle. Binds the DnaA box (a 9 base pair repeat at the origin) and separates the double-stranded (ds)DNA. Forms a right-handed helical filament on oriC DNA; dsDNA binds to the exterior of the filament while single-stranded (ss)DNA is stabiized in the filament's interior. The ATP-DnaA-oriC complex binds and stabilizes one strand of the AT-rich DNA unwinding element (DUE), permitting loading of DNA polymerase. After initiation quickly degrades to an ADP-DnaA complex that is not apt for DNA replication. Binds acidic phospholipids. The protein is Chromosomal replication initiator protein DnaA of Chlorobaculum tepidum (strain ATCC 49652 / DSM 12025 / NBRC 103806 / TLS) (Chlorobium tepidum).